Here is a 227-residue protein sequence, read N- to C-terminus: Urease subunit gamma/beta (227 aa).

The segment at 1–101 is urease gamma; it reads MRLTPTERDR…LAVVADPVGG (101 aa). Residues 102-227 are urease beta; the sequence is GGLGDDAPGA…AACGYLGADR (126 aa).

The protein in the N-terminal section; belongs to the urease gamma subunit family. It in the C-terminal section; belongs to the urease beta subunit family. Heterohexamer of 3 UreC (alpha) and 3 UreAB (gamma/beta) subunits.

The protein resides in the cytoplasm. The catalysed reaction is urea + 2 H2O + H(+) = hydrogencarbonate + 2 NH4(+). Its pathway is nitrogen metabolism; urea degradation; CO(2) and NH(3) from urea (urease route): step 1/1. The polypeptide is Urease subunit gamma/beta (Streptomyces coelicolor (strain ATCC BAA-471 / A3(2) / M145)).